The primary structure comprises 1030 residues: uncharacterized protein (1030 aa).

Positions 1 to 15 (MSENSTDSKNFQFSE) are enriched in polar residues. Residues 1–53 (MSENSTDSKNFQFSEGSRESSNDELKVLLRDTETKEDEKSSFSNSEEESIIEN) form a disordered region. Residues 16-40 (GSRESSNDELKVLLRDTETKEDEKS) are compositionally biased toward basic and acidic residues. S41 bears the Phosphoserine mark. The Helicase ATP-binding domain maps to 134 to 290 (IKCVERMESV…WISEIHKQPC (157 aa)). ATP is bound at residue 147-154 (AHTSAGKT). Positions 238-241 (DEVH) match the DEVH box motif. Residues 357–561 (SLERIINMVL…GMILNLMRIE (205 aa)) enclose the Helicase C-terminal domain.

This sequence belongs to the helicase family. SKI2 subfamily.

The protein localises to the nucleus. This is an uncharacterized protein from Schizosaccharomyces pombe (strain 972 / ATCC 24843) (Fission yeast).